The chain runs to 334 residues: Cathepsin L2 (334 aa).

The signal sequence occupies residues 1-17 (MNLSLVLAAFCLGIASA). A propeptide spans 18 to 113 (VPKFDQNLDT…KVFREPLFLD (96 aa)) (activation peptide). 2 disulfides stabilise this stretch: cysteine 135-cysteine 178 and cysteine 169-cysteine 211. Cysteine 138 is a catalytic residue. N-linked (GlcNAc...) asparagine glycosylation is present at asparagine 221. An intrachain disulfide couples cysteine 270 to cysteine 323. The active site involves histidine 277. N-linked (GlcNAc...) asparagine glycosylation is present at asparagine 292. The active site involves asparagine 301.

Belongs to the peptidase C1 family. As to expression, predominantly expressed in the thymus and testis. Also expressed in corneal epithelium, and to a lesser extent in conjunctival epithelium and skin.

The protein localises to the lysosome. The enzyme catalyses The recombinant enzyme hydrolyzes proteins (serum albumin, collagen) and synthetic substrates (Z-Phe-Arg-NHMec &gt; Z-Leu-Arg-NHMec &gt; Z-Val-Arg-NHMec).. Inhibited by CST6. Its function is as follows. Cysteine protease. May have an important role in corneal physiology. The protein is Cathepsin L2 (CTSV) of Homo sapiens (Human).